Reading from the N-terminus, the 218-residue chain is Adenylate kinase (218 aa).

10 to 15 is a binding site for ATP; sequence GAGKGT. An NMP region spans residues 30–59; that stretch reads STGDMLRAAVKAGTPLGLEAKKVMDAGGLV. AMP contacts are provided by residues Thr-31, Arg-36, 57–59, 85–88, and Gln-92; these read GLV and GFPR. Positions 122-159 are LID; it reads ERRVHPASGRSYHVRFNPPKAEGVDDVTGEPLVQRDDD. ATP-binding positions include Arg-123 and 132-133; that span reads SY. The AMP site is built by Arg-156 and Arg-167. Gly-203 contacts ATP.

The protein belongs to the adenylate kinase family. In terms of assembly, monomer.

It is found in the cytoplasm. It catalyses the reaction AMP + ATP = 2 ADP. Its pathway is purine metabolism; AMP biosynthesis via salvage pathway; AMP from ADP: step 1/1. Catalyzes the reversible transfer of the terminal phosphate group between ATP and AMP. Plays an important role in cellular energy homeostasis and in adenine nucleotide metabolism. This Bordetella pertussis (strain Tohama I / ATCC BAA-589 / NCTC 13251) protein is Adenylate kinase.